The sequence spans 164 residues: S-ribosylhomocysteine lyase (164 aa).

Fe cation-binding residues include His-61, His-65, and Cys-131.

The protein belongs to the LuxS family. As to quaternary structure, homodimer. The cofactor is Fe cation.

It catalyses the reaction S-(5-deoxy-D-ribos-5-yl)-L-homocysteine = (S)-4,5-dihydroxypentane-2,3-dione + L-homocysteine. Involved in the synthesis of autoinducer 2 (AI-2) which is secreted by bacteria and is used to communicate both the cell density and the metabolic potential of the environment. The regulation of gene expression in response to changes in cell density is called quorum sensing. Catalyzes the transformation of S-ribosylhomocysteine (RHC) to homocysteine (HC) and 4,5-dihydroxy-2,3-pentadione (DPD). In Bifidobacterium longum subsp. infantis (strain ATCC 15697 / DSM 20088 / JCM 1222 / NCTC 11817 / S12), this protein is S-ribosylhomocysteine lyase.